The following is a 457-amino-acid chain: Multidrug resistance protein MdtK (457 aa).

The next 12 membrane-spanning stretches (helical) occupy residues 11–31, 53–73, 93–113, 127–147, 159–179, 190–210, 249–269, 276–296, 313–333, 357–377, 387–407, and 417–437; these read LSALAVPVIIAQVSQTSMGVV, IWLPAILFGHGLLLALTPVVA, FLAAIISVLTMLVLYQGEYAI, AIGYLHALLWGVPGYLFYQVL, PGMMIGFIGLLINIPINYIFI, GVGCGVATASVYWIMMLLMML, LLFEVTLFAVVALLVLPLGVV, IALNFSSLMFVLPLSVGVATT, IAAHTGIMAGVALACCTAIFT, LMLLAAVYQISDAVQVIGTGV, IFYITFVAYWVLGLPSGYLLA, and GPAGFWCGFIIGLTAAAVMMV.

Belongs to the multi antimicrobial extrusion (MATE) (TC 2.A.66.1) family. MdtK subfamily.

The protein localises to the cell inner membrane. Multidrug efflux pump that functions probably as a Na(+)/drug antiporter. The protein is Multidrug resistance protein MdtK of Pectobacterium atrosepticum (strain SCRI 1043 / ATCC BAA-672) (Erwinia carotovora subsp. atroseptica).